The chain runs to 153 residues: Myoglobin (153 aa).

The region spanning 1–147 (MATACVKSLE…FSDECLDHLK (147 aa)) is the Globin domain. A heme b-binding site is contributed by His94.

Belongs to the globin family. In terms of assembly, homodimer; disulfide-linked. The N-terminus is blocked. In terms of tissue distribution, body wall globin is localized in cellular compartments belonging to the hypodermis, the dorsal, ventral and lateral cords, the nerve ring, and body wall muscle.

The protein localises to the cytoplasm. In terms of biological role, high oxygen affinity. Probably supplies oxygen needed for muscle activity. This Ascaris suum (Pig roundworm) protein is Myoglobin.